The chain runs to 555 residues: MAPAIVMSNYEEEEIVRPVADFSPSLWGDHFHSFSVDNQVAEKYAQEIETLKEQTSTMLSAACGTTLTEKLNLIDIIERLGIAYHFEKQIEDMLDHIYRADPYFEAHEYNDLNTSSVQFRLLRQHGYNVSPNIFSRFQDANGKFKESLRSDIRGLLNLYEASHVRTHKEDILEEALVFSVGHLESAAPHLKSPLSKQVTHALEQSLHKSIPRVEIRYFISIYEEEEFKNDLLLRFAKLDYNLLQMLHKHELSEVSRWWKDLDFVTTLPYARDRAVECYFWTMGVYAEPQYSQARVMLAKTIAMISIVDDTFDAYGIVKELEVYTDAIQRWDISQIDRLPEYMKISYKALLDLYDDYEKELSKDGRSDVVHYAKERMKEIVGNYFIEGKWFIEGYMPSVSEYLSNALATSTYYLLTTTSYLGMKSATKEHFEWLATNPKILEANATLCRVVDDIATYEVEKGRGQIATGIECYMRDYGVSTEVAMEKFQEMADIAWKDVNEEILRPTPVSSEILTRILNLARIIDVTYKHNQDGYTHPEKVLKPHIIALVVDSIDI.

D308, D312, D451, T455, and E459 together coordinate Mg(2+). The short motif at 308–312 (DDTFD) is the DDXXD motif element.

It belongs to the terpene synthase family. Tpsa subfamily. It depends on Mg(2+) as a cofactor.

Its subcellular location is the cytoplasm. The enzyme catalyses (2E,6E)-farnesyl diphosphate = (-)-vetispiradiene + diphosphate. It functions in the pathway secondary metabolite biosynthesis; terpenoid biosynthesis. Its function is as follows. Sesquiterpene synthase that catalyzes the formation of vetispiradiene from trans,trans-farnesyl diphosphate. The initial internal cyclization produces the monocyclic intermediate germacrene A. The polypeptide is Vetispiradiene synthase 1 (Hyoscyamus muticus (Egyptian henbane)).